Reading from the N-terminus, the 239-residue chain is Leucine rich adaptor protein 1 (239 aa).

LRR repeat units follow at residues 55 to 83 (LGDK…LVTL) and 93 to 114 (LLEE…QYSL). Positions 105 to 116 (SSLTSSQYSLTG) are enriched in low complexity. Residues 105 to 138 (SSLTSSQYSLTGGSPGRSRRGSWDSLPDTSSTDR) are disordered. S118, S126, and S129 each carry phosphoserine.

In terms of assembly, forms a tripartite complex with CDC42BPA/CDC42BPB and MYO18A acting as an adapter connecting both. Its binding to CDC42BPA/CDC42BPB results in their activation by abolition of their negative autoregulation. Interacts with CDC42BPA and CDC42BPB. In terms of processing, phosphorylated.

The protein localises to the cytoplasm. Its function is as follows. Acts as an activator of the canonical NF-kappa-B pathway and drive the production of pro-inflammatory cytokines. Promotes the antigen (Ag)-presenting and priming function of dendritic cells via the canonical NF-kappa-B pathway. In concert with MYO18A and CDC42BPA/CDC42BPB, is involved in modulating lamellar actomyosin retrograde flow that is crucial to cell protrusion and migration. Activates CDC42BPA/CDC42BPB and targets it to actomyosin through its interaction with MYO18A, leading to MYL9/MLC2 phosphorylation and MYH9/MYH10-dependent actomyosin assembly in the lamella. This Mus musculus (Mouse) protein is Leucine rich adaptor protein 1 (Lurap1).